A 414-amino-acid chain; its full sequence is HERV-H LTR-associating protein 2 (414 aa).

A signal peptide spans 1-22 (MKAQTALSFFLILITSLSGSQG). The region spanning 61–131 (IHWKYQDSYK…YVGTAIQVIT (71 aa)) is the Ig-like V-type 1 domain. N-linked (GlcNAc...) asparagine glycosylation is found at asparagine 90 and asparagine 103. Residues 138 to 222 (VGVFLTPVMK…ENSLLKQTWT (85 aa)) form the Ig-like C1-type domain. Intrachain disulfides connect cysteine 159–cysteine 210 and cysteine 243–cysteine 317. Positions 235-328 (QSEHVSLSCQ…ISSDEYTLLT (94 aa)) constitute an Ig-like V-type 2 domain. Asparagine 318 is a glycosylation site (N-linked (GlcNAc...) asparagine). Residues 345 to 365 (KGLWILVPSAILAAFLLIWSV) form a helical membrane-spanning segment. The tract at residues 383–414 (GAQQERCCVPPGERCPSAPDNGEENVPLSGKV) is disordered.

In terms of assembly, interacts with TMIGD2. Expressed at high levels in colon, kidney, testis, lung and pancreas, and at lower levels in small intestine, liver and skeletal muscle. In immune cells, highly expressed in B-cells, dendritic cells and macrophages. Not detected in T-cells.

It is found in the membrane. Through interaction with TMIGD2, costimulates T-cells in the context of TCR-mediated activation. Enhances T-cell proliferation and cytokine production via an AKT-dependent signaling cascade. The sequence is that of HERV-H LTR-associating protein 2 (HHLA2) from Homo sapiens (Human).